Here is a 262-residue protein sequence, read N- to C-terminus: Small ribosomal subunit protein eS1 (262 aa).

It belongs to the eukaryotic ribosomal protein eS1 family. As to quaternary structure, component of the small ribosomal subunit. Mature ribosomes consist of a small (40S) and a large (60S) subunit. The 40S subunit contains about 33 different proteins and 1 molecule of RNA (18S). The 60S subunit contains about 49 different proteins and 3 molecules of RNA (25S, 5.8S and 5S).

Its subcellular location is the cytoplasm. In Theileria annulata, this protein is Small ribosomal subunit protein eS1.